The following is a 937-amino-acid chain: Bifunctional glutamine synthetase adenylyltransferase/adenylyl-removing enzyme (937 aa).

The adenylyl removase stretch occupies residues 1 to 436 (MSQPIPSASP…AAEFAELLAP (436 aa)). The tract at residues 443-937 (PDTLADYWRA…QLRFQPGKGA (495 aa)) is adenylyl transferase.

This sequence belongs to the GlnE family. Requires Mg(2+) as cofactor.

It catalyses the reaction [glutamine synthetase]-O(4)-(5'-adenylyl)-L-tyrosine + phosphate = [glutamine synthetase]-L-tyrosine + ADP. It carries out the reaction [glutamine synthetase]-L-tyrosine + ATP = [glutamine synthetase]-O(4)-(5'-adenylyl)-L-tyrosine + diphosphate. Its function is as follows. Involved in the regulation of glutamine synthetase GlnA, a key enzyme in the process to assimilate ammonia. When cellular nitrogen levels are high, the C-terminal adenylyl transferase (AT) inactivates GlnA by covalent transfer of an adenylyl group from ATP to specific tyrosine residue of GlnA, thus reducing its activity. Conversely, when nitrogen levels are low, the N-terminal adenylyl removase (AR) activates GlnA by removing the adenylyl group by phosphorolysis, increasing its activity. The regulatory region of GlnE binds the signal transduction protein PII (GlnB) which indicates the nitrogen status of the cell. The sequence is that of Bifunctional glutamine synthetase adenylyltransferase/adenylyl-removing enzyme from Xanthomonas campestris pv. campestris (strain B100).